A 119-amino-acid polypeptide reads, in one-letter code: Ribonuclease pancreatic (119 aa).

Gln1 is modified (pyrrolidone carboxylic acid). His10 acts as the Proton acceptor in catalysis. Cystine bridges form between Cys25–Cys80, Cys39–Cys91, and Cys57–Cys106. 40 to 44 (KTRNT) contributes to the substrate binding site. Catalysis depends on His113, which acts as the Proton donor.

Belongs to the pancreatic ribonuclease family. As to quaternary structure, monomer. Interacts with and forms tight 1:1 complexes with RNH1. Dimerization of two such complexes may occur. Interaction with RNH1 inhibits this protein. In terms of tissue distribution, pancreas.

It is found in the secreted. It catalyses the reaction an [RNA] containing cytidine + H2O = an [RNA]-3'-cytidine-3'-phosphate + a 5'-hydroxy-ribonucleotide-3'-[RNA].. The catalysed reaction is an [RNA] containing uridine + H2O = an [RNA]-3'-uridine-3'-phosphate + a 5'-hydroxy-ribonucleotide-3'-[RNA].. In terms of biological role, endonuclease that catalyzes the cleavage of RNA on the 3' side of pyrimidine nucleotides. Acts on single-stranded and double-stranded RNA. This chain is Ribonuclease pancreatic, found in Iguana iguana (Common iguana).